Here is a 153-residue protein sequence, read N- to C-terminus: Nucleoside diphosphate kinase (153 aa).

6 residues coordinate ATP: lysine 11, phenylalanine 59, arginine 87, threonine 93, arginine 104, and asparagine 114. Histidine 117 serves as the catalytic Pros-phosphohistidine intermediate.

This sequence belongs to the NDK family. As to quaternary structure, homotrimer. Requires Mg(2+) as cofactor.

The enzyme catalyses a 2'-deoxyribonucleoside 5'-diphosphate + ATP = a 2'-deoxyribonucleoside 5'-triphosphate + ADP. It catalyses the reaction a ribonucleoside 5'-diphosphate + ATP = a ribonucleoside 5'-triphosphate + ADP. Major role in the synthesis of nucleoside triphosphates other than ATP. The ATP gamma phosphate is transferred to the NDP beta phosphate via a ping-pong mechanism, using a phosphorylated active-site intermediate. The protein is Nucleoside diphosphate kinase (ndk1) of Aspergillus fumigatus (strain ATCC MYA-4609 / CBS 101355 / FGSC A1100 / Af293) (Neosartorya fumigata).